We begin with the raw amino-acid sequence, 505 residues long: Cytochrome P450 4Z1 (505 aa).

Over M1 to L9 the chain is Cytoplasmic. The helical; Signal-anchor for type II membrane protein transmembrane segment at M10–I30 threads the bilayer. The Lumenal segment spans residues R31–C505. Residue C452 coordinates heme.

It belongs to the cytochrome P450 family. It depends on heme as a cofactor. As to expression, preferentially detected in breast carcinoma tissue and mammary gland, whereas only marginal expression is found in all other tested tissues.

The protein resides in the endoplasmic reticulum membrane. It is found in the microsome membrane. The enzyme catalyses an organic molecule + reduced [NADPH--hemoprotein reductase] + O2 = an alcohol + oxidized [NADPH--hemoprotein reductase] + H2O + H(+). The catalysed reaction is dodecanoate + reduced [NADPH--hemoprotein reductase] + O2 = 7-hydroxydodecanoate + oxidized [NADPH--hemoprotein reductase] + H2O + H(+). It carries out the reaction dodecanoate + reduced [NADPH--hemoprotein reductase] + O2 = 8-hydroxydodecanoate + oxidized [NADPH--hemoprotein reductase] + H2O + H(+). It catalyses the reaction dodecanoate + reduced [NADPH--hemoprotein reductase] + O2 = 9-hydroxydodecanoate + oxidized [NADPH--hemoprotein reductase] + H2O + H(+). The enzyme catalyses dodecanoate + reduced [NADPH--hemoprotein reductase] + O2 = 10-hydroxydodecanoate + oxidized [NADPH--hemoprotein reductase] + H2O + H(+). The catalysed reaction is dodecanoate + reduced [NADPH--hemoprotein reductase] + O2 = 11-hydroxydodecanoate + oxidized [NADPH--hemoprotein reductase] + H2O + H(+). It carries out the reaction tetradecanoate + reduced [NADPH--hemoprotein reductase] + O2 = 9-hydroxytetradecanoate + oxidized [NADPH--hemoprotein reductase] + H2O + H(+). It catalyses the reaction tetradecanoate + reduced [NADPH--hemoprotein reductase] + O2 = 10-hydroxytetradecanoate + oxidized [NADPH--hemoprotein reductase] + H2O + H(+). The enzyme catalyses tetradecanoate + reduced [NADPH--hemoprotein reductase] + O2 = 11-hydroxytetradecanoate + oxidized [NADPH--hemoprotein reductase] + H2O + H(+). The catalysed reaction is tetradecanoate + reduced [NADPH--hemoprotein reductase] + O2 = 12-hydroxytetradecanoate + oxidized [NADPH--hemoprotein reductase] + H2O + H(+). It carries out the reaction (5Z,8Z,11Z,14Z)-eicosatetraenoate + reduced [NADPH--hemoprotein reductase] + O2 = (14S,15R)-epoxy-(5Z,8Z,11Z)-eicosatrienoate + oxidized [NADPH--hemoprotein reductase] + H2O + H(+). Functionally, a cytochrome P450 monooxygenase that catalyzes the in-chain oxidation of fatty acids. Catalyzes the hydroxylation of carbon-hydrogen bonds. Hydroxylates lauric and myristic acids predominantly at the omega-4 and omega-2 positions, respectively. Catalyzes the epoxidation of double bonds of polyunsaturated fatty acids (PUFA). Displays an absolute stereoselectivity in the epoxidation of arachidonic acid producing the 14(S),15(R)-epoxyeicosatrienoic acid (EET) enantiomer. Mechanistically, uses molecular oxygen inserting one oxygen atom into a substrate, and reducing the second into a water molecule, with two electrons provided by NADPH via cytochrome P450 reductase (CPR; NADPH-ferrihemoprotein reductase). In Homo sapiens (Human), this protein is Cytochrome P450 4Z1.